Consider the following 517-residue polypeptide: Glutamate--cysteine ligase (517 aa).

Belongs to the glutamate--cysteine ligase type 1 family. Type 1 subfamily.

It catalyses the reaction L-cysteine + L-glutamate + ATP = gamma-L-glutamyl-L-cysteine + ADP + phosphate + H(+). It participates in sulfur metabolism; glutathione biosynthesis; glutathione from L-cysteine and L-glutamate: step 1/2. This Pectobacterium atrosepticum (strain SCRI 1043 / ATCC BAA-672) (Erwinia carotovora subsp. atroseptica) protein is Glutamate--cysteine ligase.